The sequence spans 245 residues: MRHDGRQHDELRPITFDLDFITHPEGSVLITAGNTKVICNASVEDRVPPFLRGGGKGWITAEYSMLPRATNQRTIRESSKGKVSGRTMEIQRLIGRALRAVVDLEKLGERTIWIDCDVIQADGGTRTASITGAFLAMAIAIGKLVKSGVIKTSPVTDYLAAISVGMDKEEGLLLDLNYEEDSAAEVDMNIIMTGSGRFVELQGTGEEATFSREDLNGLLSLAEKGIQTLIQKQKEVLGETLPELK.

Phosphate is bound by residues arginine 86 and 124 to 126 (GTR).

It belongs to the RNase PH family. As to quaternary structure, homohexameric ring arranged as a trimer of dimers.

The catalysed reaction is tRNA(n+1) + phosphate = tRNA(n) + a ribonucleoside 5'-diphosphate. Functionally, phosphorolytic 3'-5' exoribonuclease that plays an important role in tRNA 3'-end maturation. Removes nucleotide residues following the 3'-CCA terminus of tRNAs; can also add nucleotides to the ends of RNA molecules by using nucleoside diphosphates as substrates, but this may not be physiologically important. Probably plays a role in initiation of 16S rRNA degradation (leading to ribosome degradation) during starvation. The protein is Ribonuclease PH of Bacillus velezensis (strain DSM 23117 / BGSC 10A6 / LMG 26770 / FZB42) (Bacillus amyloliquefaciens subsp. plantarum).